Reading from the N-terminus, the 323-residue chain is Fructose-1,6-bisphosphatase class 1 (323 aa).

Residues Glu-93, Asp-114, Leu-116, and Asp-117 each coordinate Mg(2+). Substrate-binding positions include 117–120, Asn-205, Tyr-233, and Lys-263; that span reads DGSS. Glu-269 contributes to the Mg(2+) binding site.

Belongs to the FBPase class 1 family. As to quaternary structure, homotetramer. It depends on Mg(2+) as a cofactor.

Its subcellular location is the cytoplasm. The enzyme catalyses beta-D-fructose 1,6-bisphosphate + H2O = beta-D-fructose 6-phosphate + phosphate. The protein operates within carbohydrate biosynthesis; gluconeogenesis. The polypeptide is Fructose-1,6-bisphosphatase class 1 (Sulfurihydrogenibium sp. (strain YO3AOP1)).